A 243-amino-acid chain; its full sequence is UDP-2,3-diacylglucosamine hydrolase (243 aa).

Mn(2+) is bound by residues Asp-8, His-10, Asp-41, Asn-79, and His-114. Position 79–80 (79–80) interacts with substrate; sequence NR. The substrate site is built by Asp-122, Lys-164, Lys-167, and His-195. Residues His-195 and His-197 each contribute to the Mn(2+) site.

This sequence belongs to the LpxH family. It depends on Mn(2+) as a cofactor.

Its subcellular location is the cell inner membrane. The catalysed reaction is UDP-2-N,3-O-bis[(3R)-3-hydroxytetradecanoyl]-alpha-D-glucosamine + H2O = 2-N,3-O-bis[(3R)-3-hydroxytetradecanoyl]-alpha-D-glucosaminyl 1-phosphate + UMP + 2 H(+). It participates in glycolipid biosynthesis; lipid IV(A) biosynthesis; lipid IV(A) from (3R)-3-hydroxytetradecanoyl-[acyl-carrier-protein] and UDP-N-acetyl-alpha-D-glucosamine: step 4/6. Its function is as follows. Hydrolyzes the pyrophosphate bond of UDP-2,3-diacylglucosamine to yield 2,3-diacylglucosamine 1-phosphate (lipid X) and UMP by catalyzing the attack of water at the alpha-P atom. Involved in the biosynthesis of lipid A, a phosphorylated glycolipid that anchors the lipopolysaccharide to the outer membrane of the cell. The polypeptide is UDP-2,3-diacylglucosamine hydrolase (Vibrio vulnificus (strain CMCP6)).